We begin with the raw amino-acid sequence, 161 residues long: ATP synthase subunit b 1 (161 aa).

The helical transmembrane segment at 5–25 (EFWVAVAFVIFCGIVWKAGGF) threads the bilayer.

It belongs to the ATPase B chain family. F-type ATPases have 2 components, F(1) - the catalytic core - and F(0) - the membrane proton channel. F(1) has five subunits: alpha(3), beta(3), gamma(1), delta(1), epsilon(1). F(0) has three main subunits: a(1), b(2) and c(10-14). The alpha and beta chains form an alternating ring which encloses part of the gamma chain. F(1) is attached to F(0) by a central stalk formed by the gamma and epsilon chains, while a peripheral stalk is formed by the delta and b chains.

It is found in the cell inner membrane. Its function is as follows. F(1)F(0) ATP synthase produces ATP from ADP in the presence of a proton or sodium gradient. F-type ATPases consist of two structural domains, F(1) containing the extramembraneous catalytic core and F(0) containing the membrane proton channel, linked together by a central stalk and a peripheral stalk. During catalysis, ATP synthesis in the catalytic domain of F(1) is coupled via a rotary mechanism of the central stalk subunits to proton translocation. Functionally, component of the F(0) channel, it forms part of the peripheral stalk, linking F(1) to F(0). The chain is ATP synthase subunit b 1 from Methylobacterium sp. (strain 4-46).